Consider the following 351-residue polypeptide: UDP-3-O-acylglucosamine N-acyltransferase (351 aa).

The active-site Proton acceptor is the His240.

The protein belongs to the transferase hexapeptide repeat family. LpxD subfamily. Homotrimer.

It carries out the reaction a UDP-3-O-[(3R)-3-hydroxyacyl]-alpha-D-glucosamine + a (3R)-hydroxyacyl-[ACP] = a UDP-2-N,3-O-bis[(3R)-3-hydroxyacyl]-alpha-D-glucosamine + holo-[ACP] + H(+). The protein operates within bacterial outer membrane biogenesis; LPS lipid A biosynthesis. In terms of biological role, catalyzes the N-acylation of UDP-3-O-acylglucosamine using 3-hydroxyacyl-ACP as the acyl donor. Is involved in the biosynthesis of lipid A, a phosphorylated glycolipid that anchors the lipopolysaccharide to the outer membrane of the cell. In Methylacidiphilum infernorum (isolate V4) (Methylokorus infernorum (strain V4)), this protein is UDP-3-O-acylglucosamine N-acyltransferase.